Reading from the N-terminus, the 82-residue chain is Omega-conotoxin PnVIB (82 aa).

The first 22 residues, 1 to 22 (MKLTCMMIVAVLFLTAWTVVTA), serve as a signal peptide directing secretion. The propeptide occupies 23–52 (EPHSSNVLENLYLKAHHEMENPEASKLNTR). 3 disulfides stabilise this stretch: Cys56/Cys73, Cys63/Cys77, and Cys72/Cys81.

As to expression, expressed by the venom duct.

The protein localises to the secreted. In terms of biological role, omega-conotoxins act at presynaptic membranes, they bind and block voltage-gated calcium channels (Cav). Acts on high voltage-activated (HVA) calcium currents in molluscan neurons. The sequence is that of Omega-conotoxin PnVIB from Conus pennaceus (Feathered cone).